A 182-amino-acid polypeptide reads, in one-letter code: Ribosome maturation factor RimM (182 aa).

The region spanning 103–182 (DGSYYWKDLM…TIEVDWDPGF (80 aa)) is the PRC barrel domain.

This sequence belongs to the RimM family. In terms of assembly, binds ribosomal protein uS19.

The protein localises to the cytoplasm. Functionally, an accessory protein needed during the final step in the assembly of 30S ribosomal subunit, possibly for assembly of the head region. Essential for efficient processing of 16S rRNA. May be needed both before and after RbfA during the maturation of 16S rRNA. It has affinity for free ribosomal 30S subunits but not for 70S ribosomes. The chain is Ribosome maturation factor RimM from Citrobacter koseri (strain ATCC BAA-895 / CDC 4225-83 / SGSC4696).